Reading from the N-terminus, the 619-residue chain is MIIRLHFYYLLTLVYHLGLVGAYEKAARKRIQPPDLIPGPPGHKLGDERPPHYDHRPPYKKHIDNIPAYNLTDLIDDKLLNKYENSCTVNVLTGGFISLASNSWHLRAYNYTLNYPSFLIRCDNGSANPNFSHVLQDFVYDINNKFNVQDDSSKYIGKDPFPLGMIMITFASGCICVATWMLFLVVLLLPSDNHNRRNKVVHVYVLFSAIIRTVFLNETIAVIFDSQYHDDYQDASQFESFIVETAPYKICELVANILSDINWIYIVHYLQSNYGKPTWNWIPFKMKKGTHIIITVGCFLSLADNILFANLLWRKNLVVLKVFYKLIELLIYTIFISIICYFTWHNFAYILLPKTAEINTDGKCKTKLRILWENYHETIPLLAYNILIFILFYFTTIFFAAFTKHVRGWTFNFVHLLKVLITVNVWGLIGVLEKRELHISKKTVLGRKINNRDKFFANPTVNYYGEDLGKHLSAITLNRDLNTTKSNTTSHDSSSLVGSPSPTWKSPIERIRDRRRRHKIMKSENKFGQNPSFGSKSNGKPNTKTTLSKYRQLLRKPRRKTNSYEPKNGIGQNKEGSTVRPGADKHIRDSNYLATDISDNESMETELRTNHIYNYENSD.

Residue Met1 is a topological domain, extracellular. Residues 2-22 traverse the membrane as a helical segment; sequence IIRLHFYYLLTLVYHLGLVGA. The Cytoplasmic segment spans residues 23–167; the sequence is YEKAARKRIQ…KDPFPLGMIM (145 aa). The disordered stretch occupies residues 33–54; it reads PPDLIPGPPGHKLGDERPPHYD. The span at 44-54 shows a compositional bias: basic and acidic residues; the sequence is KLGDERPPHYD. A helical membrane pass occupies residues 168 to 188; that stretch reads ITFASGCICVATWMLFLVVLL. The Extracellular segment spans residues 189 to 203; the sequence is LPSDNHNRRNKVVHV. The helical transmembrane segment at 204-224 threads the bilayer; it reads YVLFSAIIRTVFLNETIAVIF. The Cytoplasmic portion of the chain corresponds to 225–291; the sequence is DSQYHDDYQD…IPFKMKKGTH (67 aa). The chain crosses the membrane as a helical span at residues 292–312; it reads IIITVGCFLSLADNILFANLL. At 313–321 the chain is on the extracellular side; it reads WRKNLVVLK. The chain crosses the membrane as a helical span at residues 322–342; that stretch reads VFYKLIELLIYTIFISIICYF. Residues 343-378 lie on the Cytoplasmic side of the membrane; it reads TWHNFAYILLPKTAEINTDGKCKTKLRILWENYHET. A helical membrane pass occupies residues 379-399; the sequence is IPLLAYNILIFILFYFTTIFF. At 400–410 the chain is on the extracellular side; that stretch reads AAFTKHVRGWT. A helical transmembrane segment spans residues 411-431; sequence FNFVHLLKVLITVNVWGLIGV. Topologically, residues 432–619 are cytoplasmic; sequence LEKRELHISK…NHIYNYENSD (188 aa). 2 stretches are compositionally biased toward polar residues: residues 485–504 and 526–549; these read KSNTTSHDSSSLVGSPSPTW and KFGQNPSFGSKSNGKPNTKTTLSK. Disordered stretches follow at residues 485–506 and 520–586; these read KSNTTSHDSSSLVGSPSPTWKS and IMKS…ADKH. Residues 552–561 show a composition bias toward basic residues; sequence QLLRKPRRKT.

The protein localises to the membrane. Involved in invasion during filamentous growth. This is Protein DFG16 (DFG16) from Saccharomyces cerevisiae (strain ATCC 204508 / S288c) (Baker's yeast).